The primary structure comprises 91 residues: Small ribosomal subunit protein bS20 (91 aa).

Residues 1-21 are compositionally biased toward basic and acidic residues; it reads MPLHKSAEKRLRQSARRNERN. Disordered stretches follow at residues 1–25 and 71–91; these read MPLHKSAEKRLRQSARRNERNRARK and NKASRKKSQLSRMLNAYAQKD.

The protein belongs to the bacterial ribosomal protein bS20 family.

In terms of biological role, binds directly to 16S ribosomal RNA. In Prosthecochloris aestuarii (strain DSM 271 / SK 413), this protein is Small ribosomal subunit protein bS20.